The chain runs to 311 residues: tRNA pseudouridine synthase B (311 aa).

The Nucleophile role is filled by Asp39. Residues 237 to 268 are disordered; that stretch reads RELSEQETTEISFGRRIAAGPGAGTPDAATAE. Positions 254–268 are enriched in low complexity; the sequence is AAGPGAGTPDAATAE.

The protein belongs to the pseudouridine synthase TruB family. Type 1 subfamily.

The enzyme catalyses uridine(55) in tRNA = pseudouridine(55) in tRNA. In terms of biological role, responsible for synthesis of pseudouridine from uracil-55 in the psi GC loop of transfer RNAs. This Paenarthrobacter aurescens (strain TC1) protein is tRNA pseudouridine synthase B.